A 255-amino-acid chain; its full sequence is Pimeloyl-[acyl-carrier protein] methyl ester esterase (255 aa).

The region spanning 16–241 (LVLVHGWGMN…QSSHAPFMTE (226 aa)) is the AB hydrolase-1 domain. Residues W22, 82 to 83 (SL), and 143 to 147 (FMALQ) contribute to the substrate site. The active-site Nucleophile is the S82. Active-site residues include D207 and H235. Position 235 (H235) interacts with substrate.

This sequence belongs to the AB hydrolase superfamily. Carboxylesterase BioH family. In terms of assembly, monomer.

The protein localises to the cytoplasm. It carries out the reaction 6-carboxyhexanoyl-[ACP] methyl ester + H2O = 6-carboxyhexanoyl-[ACP] + methanol + H(+). It functions in the pathway cofactor biosynthesis; biotin biosynthesis. Functionally, the physiological role of BioH is to remove the methyl group introduced by BioC when the pimeloyl moiety is complete. It allows to synthesize pimeloyl-ACP via the fatty acid synthetic pathway through the hydrolysis of the ester bonds of pimeloyl-ACP esters. The sequence is that of Pimeloyl-[acyl-carrier protein] methyl ester esterase from Vibrio cholerae serotype O1 (strain ATCC 39315 / El Tor Inaba N16961).